The sequence spans 330 residues: MKIAVLGGGSWGTALAHLLAGKGEDVRLWVRDPAVVEGVNRDHENPRYLKGLHLHEALRATCDAGEALEGADILLSVVPCQQTRTVLRSLRPRLKTGMVVVSASKGIETDGLRTVGEMVEDELAGLAPRYAVISGPSFAAEVVAGMPTAVVLGCADRDLGGTLREVFSTPTFRTYSCTDVRGVELGGAVKNVIAIAAGLSDGLGFGSNARAGLITRGLAEMGRLGVALGARGSTFMGLSGLGDLVLTCTGDLSRNRQVGLRLAEGQGLDAIVAGMGMVAEGVKTTEAVYELAQREGVDLPITQAMYAVLHDGRDPRDMVQELMTRELREE.

NADPH is bound by residues Ser10, Trp11, Arg31, and Lys105. Sn-glycerol 3-phosphate contacts are provided by Lys105, Gly135, and Ser137. Ala139 is an NADPH binding site. Lys190, Asp243, Ser253, Arg254, and Asn255 together coordinate sn-glycerol 3-phosphate. Catalysis depends on Lys190, which acts as the Proton acceptor. Arg254 contacts NADPH. The NADPH site is built by Val278 and Glu280.

The protein belongs to the NAD-dependent glycerol-3-phosphate dehydrogenase family.

It localises to the cytoplasm. The enzyme catalyses sn-glycerol 3-phosphate + NAD(+) = dihydroxyacetone phosphate + NADH + H(+). The catalysed reaction is sn-glycerol 3-phosphate + NADP(+) = dihydroxyacetone phosphate + NADPH + H(+). It functions in the pathway membrane lipid metabolism; glycerophospholipid metabolism. Its function is as follows. Catalyzes the reduction of the glycolytic intermediate dihydroxyacetone phosphate (DHAP) to sn-glycerol 3-phosphate (G3P), the key precursor for phospholipid synthesis. The sequence is that of Glycerol-3-phosphate dehydrogenase [NAD(P)+] from Nitratidesulfovibrio vulgaris (strain ATCC 29579 / DSM 644 / CCUG 34227 / NCIMB 8303 / VKM B-1760 / Hildenborough) (Desulfovibrio vulgaris).